Reading from the N-terminus, the 99-residue chain is Beta-2-microglobulin (99 aa).

Residues 5–92 (PNVQVYSRHP…KHVTLKEPMT (88 aa)) form the Ig-like C1-type domain. Cysteine 25 and cysteine 80 are disulfide-bonded.

The protein belongs to the beta-2-microglobulin family. Heterodimer of an alpha chain and a beta chain. Beta-2-microglobulin is the beta-chain of major histocompatibility complex class I molecules.

Its subcellular location is the secreted. In terms of biological role, component of the class I major histocompatibility complex (MHC). Involved in the presentation of peptide antigens to the immune system. The polypeptide is Beta-2-microglobulin (B2M) (Oryctolagus cuniculus (Rabbit)).